The chain runs to 130 residues: Small ribosomal subunit protein uS9 (130 aa).

The protein belongs to the universal ribosomal protein uS9 family.

The protein is Small ribosomal subunit protein uS9 of Mycoplasmoides gallisepticum (strain R(low / passage 15 / clone 2)) (Mycoplasma gallisepticum).